We begin with the raw amino-acid sequence, 762 residues long: uncharacterized protein (762 aa).

Residues 334–542 (IIDILSNYLI…SDEEIAEHIL (209 aa)) enclose the MCM domain. Residue 384–391 (TDPGIGKS) coordinates ATP.

Belongs to the MCM family.

This is an uncharacterized protein from Methanocaldococcus jannaschii (strain ATCC 43067 / DSM 2661 / JAL-1 / JCM 10045 / NBRC 100440) (Methanococcus jannaschii).